A 362-amino-acid polypeptide reads, in one-letter code: Sulfoquinovose monooxygenase (362 aa).

This sequence belongs to the SsuD family.

The catalysed reaction is 6-sulfo-D-quinovose + FMNH2 + O2 = 6-dehydro-D-glucose + FMN + sulfite + H2O + 2 H(+). Functionally, part of the alkanesulfonate monooxygenase (sulfo-ASMO) pathway, a D-sulfoquinovose degradation pathway that enables the complete utilization of all carbons within sulfoquinovose (SQ) with concomitant production of inorganic sulfite. Catalyzes the oxidative desulfurization of sulfoquinovose to sulfite and 6-dehydro-D-glucose. The chain is Sulfoquinovose monooxygenase from Novosphingobium aromaticivorans (strain ATCC 700278 / DSM 12444 / CCUG 56034 / CIP 105152 / NBRC 16084 / F199).